We begin with the raw amino-acid sequence, 398 residues long: Acetate kinase 1 (398 aa).

Asparagine 9 is a binding site for Mg(2+). Lysine 16 serves as a coordination point for ATP. Arginine 89 is a binding site for substrate. The active-site Proton donor/acceptor is aspartate 146. Residues 206–210 (HLGNG), 281–283 (DCR), and 329–333 (GIGEN) each bind ATP. Glutamate 384 lines the Mg(2+) pocket.

Belongs to the acetokinase family. In terms of assembly, homodimer. Requires Mg(2+) as cofactor. Mn(2+) is required as a cofactor.

It localises to the cytoplasm. The enzyme catalyses acetate + ATP = acetyl phosphate + ADP. The protein operates within metabolic intermediate biosynthesis; acetyl-CoA biosynthesis; acetyl-CoA from acetate: step 1/2. Functionally, catalyzes the formation of acetyl phosphate from acetate and ATP. Can also catalyze the reverse reaction. The sequence is that of Acetate kinase 1 from Vibrio vulnificus (strain CMCP6).